Reading from the N-terminus, the 389-residue chain is Putative zinc finger CCCH domain-containing protein 10 (389 aa).

Polar residues predominate over residues 1–11; the sequence is MANVSFTFDSQ. The interval 1-110 is disordered; it reads MANVSFTFDS…QDRRGSESRM (110 aa). Basic and acidic residues-rich tracts occupy residues 12–52 and 86–110; these read EQNK…RVSE and RSHE…ESRM. C3H1-type zinc fingers lie at residues 131–157 and 158–190; these read RPGE…YNHP and PLQE…HPKE. Residues 183–296 form a disordered region; the sequence is CPFNHPKERD…ATATGKVSGK (114 aa). 2 stretches are compositionally biased toward basic and acidic residues: residues 204 to 243 and 251 to 284; these read PDLR…KEDA and RPRD…RSSR.

The chain is Putative zinc finger CCCH domain-containing protein 10 from Arabidopsis thaliana (Mouse-ear cress).